The sequence spans 122 residues: Flagellar hook-basal body complex protein FliE (122 aa).

It belongs to the FliE family.

The protein localises to the bacterial flagellum basal body. The protein is Flagellar hook-basal body complex protein FliE of Marinobacter nauticus (strain ATCC 700491 / DSM 11845 / VT8) (Marinobacter aquaeolei).